A 148-amino-acid chain; its full sequence is Putative HTH-type transcriptional regulator NMA1593 (148 aa).

The 130-residue stretch at 2–131 folds into the HTH rrf2-type domain; the sequence is RLTTKGRFAV…GSVTLQSIIE (130 aa).

This Neisseria meningitidis serogroup A / serotype 4A (strain DSM 15465 / Z2491) protein is Putative HTH-type transcriptional regulator NMA1593.